Here is a 60-residue protein sequence, read N- to C-terminus: UPF0291 protein CTC_01690.1 (60 aa).

The protein belongs to the UPF0291 family.

It localises to the cytoplasm. The polypeptide is UPF0291 protein CTC_01690.1 (Clostridium tetani (strain Massachusetts / E88)).